Here is a 350-residue protein sequence, read N- to C-terminus: Ion-translocating oxidoreductase complex subunit D (350 aa).

Transmembrane regions (helical) follow at residues 20–40 (VMVLVILCLIPGVFLQSYFFG), 44–64 (LIQISLACLAALASEAFILKI), 68–88 (PVLNTLKDASALLTAILLAIS), 89–109 (IPPLAPWWIVVIGTIFAIIFV), and 125–145 (MAGYVLLLISFPVQMTSWLPV). Residue threonine 187 is modified to FMN phosphoryl threonine. 5 helical membrane-spanning segments follow: residues 215–235 (SWQQIYWINGAFLAGGLILLF), 241–261 (WHIPMSFLLGIGIFSFIAFAY), 267–287 (APPLFHLFSGATMLGAFFILS), 300–320 (ILYALLIAFIVVIIRNVGGYP), and 322–342 (AVAFAVLLGNMCVPLIDYYTQ).

It belongs to the NqrB/RnfD family. As to quaternary structure, the complex is composed of six subunits: RnfA, RnfB, RnfC, RnfD, RnfE and RnfG. FMN is required as a cofactor.

Its subcellular location is the cell inner membrane. Part of a membrane-bound complex that couples electron transfer with translocation of ions across the membrane. The protein is Ion-translocating oxidoreductase complex subunit D of Psychromonas ingrahamii (strain DSM 17664 / CCUG 51855 / 37).